Consider the following 55-residue polypeptide: Small ribosomal subunit protein bS21 (55 aa).

Belongs to the bacterial ribosomal protein bS21 family.

This Ureaplasma parvum serovar 3 (strain ATCC 27815 / 27 / NCTC 11736) protein is Small ribosomal subunit protein bS21.